The sequence spans 503 residues: Lanosterol 14-alpha demethylase (503 aa).

The helical transmembrane segment at 24 to 44 (GNLLSTLLIACAFTLSLVYLF) threads the bilayer. Residue C449 participates in heme binding.

It belongs to the cytochrome P450 family. Heme is required as a cofactor. In terms of processing, ubiquitinated by MARCHF6, leading to proteasomal degradation.

The protein resides in the endoplasmic reticulum membrane. It localises to the microsome membrane. It catalyses the reaction a 14alpha-methyl steroid + 3 reduced [NADPH--hemoprotein reductase] + 3 O2 = a Delta(14) steroid + formate + 3 oxidized [NADPH--hemoprotein reductase] + 4 H2O + 4 H(+). The enzyme catalyses lanosterol + 3 reduced [NADPH--hemoprotein reductase] + 3 O2 = 4,4-dimethyl-5alpha-cholesta-8,14,24-trien-3beta-ol + formate + 3 oxidized [NADPH--hemoprotein reductase] + 4 H2O + 4 H(+). The catalysed reaction is 24,25-dihydrolanosterol + 3 reduced [NADPH--hemoprotein reductase] + 3 O2 = 4,4-dimethyl-8,14-cholestadien-3beta-ol + formate + 3 oxidized [NADPH--hemoprotein reductase] + 4 H2O + 4 H(+). It carries out the reaction a 14alpha-methyl steroid + reduced [NADPH--hemoprotein reductase] + O2 = a 14alpha-hydroxymethyl steroid + oxidized [NADPH--hemoprotein reductase] + H2O + H(+). It catalyses the reaction a 14alpha-hydroxymethyl steroid + reduced [NADPH--hemoprotein reductase] + O2 = a 14alpha-formyl steroid + oxidized [NADPH--hemoprotein reductase] + 2 H2O + H(+). The enzyme catalyses a 14alpha-formyl steroid + reduced [NADPH--hemoprotein reductase] + O2 = a Delta(14) steroid + formate + oxidized [NADPH--hemoprotein reductase] + H2O + 2 H(+). The catalysed reaction is lanosterol + reduced [NADPH--hemoprotein reductase] + O2 = 32-hydroxylanosterol + oxidized [NADPH--hemoprotein reductase] + H2O + H(+). It carries out the reaction 32-hydroxylanosterol + reduced [NADPH--hemoprotein reductase] + O2 = 32-oxolanosterol + oxidized [NADPH--hemoprotein reductase] + 2 H2O + H(+). It catalyses the reaction 32-oxolanosterol + reduced [NADPH--hemoprotein reductase] + O2 = 4,4-dimethyl-5alpha-cholesta-8,14,24-trien-3beta-ol + formate + oxidized [NADPH--hemoprotein reductase] + H2O + 2 H(+). The enzyme catalyses 24,25-dihydrolanosterol + reduced [NADPH--hemoprotein reductase] + O2 = 32-hydroxy-24,25-dihydrolanosterol + oxidized [NADPH--hemoprotein reductase] + H2O + H(+). The catalysed reaction is 32-hydroxy-24,25-dihydrolanosterol + reduced [NADPH--hemoprotein reductase] + O2 = 32-oxo-24,25-dihydrolanosterol + oxidized [NADPH--hemoprotein reductase] + 2 H2O + H(+). It carries out the reaction 32-oxo-24,25-dihydrolanosterol + reduced [NADPH--hemoprotein reductase] + O2 = 4,4-dimethyl-8,14-cholestadien-3beta-ol + formate + oxidized [NADPH--hemoprotein reductase] + H2O + 2 H(+). It participates in steroid biosynthesis; zymosterol biosynthesis; zymosterol from lanosterol: step 1/6. Its activity is regulated as follows. Inhibited by azalanstat. Inhibited by azole antifungal agents ketoconazole, itraconazole and fluconazole. Functionally, sterol 14alpha-demethylase that plays a critical role in the cholesterol biosynthesis pathway, being cholesterol the major sterol component in mammalian membranes as well as a precursor for bile acid and steroid hormone synthesis. Cytochrome P450 monooxygenase that catalyzes the three-step oxidative removal of the 14alpha-methyl group (C-32) of sterols such as lanosterol (lanosta-8,24-dien-3beta-ol) and 24,25-dihydrolanosterol (DHL) in the form of formate, and converts the sterols to 4,4-dimethyl-5alpha-cholesta-8,14,24-trien-3beta-ol and 4,4-dimethyl-8,14-cholestadien-3beta-ol, respectively, which are intermediates of cholesterol biosynthesis. Can also demethylate substrates not intrinsic to mammals, such as eburicol (24-methylene-24,25-dihydrolanosterol), but at a lower rate than DHL. This is Lanosterol 14-alpha demethylase from Rattus norvegicus (Rat).